Here is a 57-residue protein sequence, read N- to C-terminus: Large ribosomal subunit protein bL32 (57 aa).

Positions 1–22 (MAVPKKKTSKSKRDKRRATWRH) are disordered.

The protein belongs to the bacterial ribosomal protein bL32 family.

The chain is Large ribosomal subunit protein bL32 from Nostoc punctiforme (strain ATCC 29133 / PCC 73102).